Reading from the N-terminus, the 460-residue chain is Ammonium transporter 1 member 3 (460 aa).

Helical transmembrane passes span 15 to 37, 50 to 72, 98 to 117, 124 to 146, 166 to 188, 209 to 227, 255 to 277, 305 to 327, 337 to 356, and 377 to 399; these read AIYL…MLCA, LTNV…AFAF, FFLY…SGSI, TAYL…HWLW, IDFA…GSIV, NATL…WFGF, AVTT…RLLV, PWAA…ILAL, AAQL…GLFA, and GLIL…SIVV.

This sequence belongs to the ammonia transporter channel (TC 1.A.11.2) family. In terms of tissue distribution, leaves.

The protein localises to the membrane. Functionally, ammonium transporter that may be involved in ammonium transport throughout the plant. The sequence is that of Ammonium transporter 1 member 3 (AMT1-3) from Solanum lycopersicum (Tomato).